A 371-amino-acid polypeptide reads, in one-letter code: MVLDPRDSLLSSYDYPLDPERIAQLPVEPRHSARLLIVQPLGMKPPIARHAEVWDWQEELRAGDLLVINDTRVLKARLRVRRSGGGLAELLVLEPRGEGCWLCLGRPAKRLRPGDQLWLEALGEEPIALQVISKDSASGGRVVQFPSHYANAEQLELLLERYGEVPLPPYIQRHDPSDSERYQTRYASRPGAVAAPTAGLHLSDELLEALKQRGVMLTSVTLHVGLGTFRPVETEDLSHLQLHSEWVEVRDDVVEAVMACRARAGRVIAVGTTSVRALEGAALAGGGFLQSFCGPVDLVIQPGYRFAVVDGLLTNFHLPKSSLLLLVSAMVGRERLLALYAEAIEHQYRFFSYGDAMWIDPEAVLPAARPC.

Belongs to the QueA family. As to quaternary structure, monomer.

The protein resides in the cytoplasm. The enzyme catalyses 7-aminomethyl-7-carbaguanosine(34) in tRNA + S-adenosyl-L-methionine = epoxyqueuosine(34) in tRNA + adenine + L-methionine + 2 H(+). It participates in tRNA modification; tRNA-queuosine biosynthesis. Transfers and isomerizes the ribose moiety from AdoMet to the 7-aminomethyl group of 7-deazaguanine (preQ1-tRNA) to give epoxyqueuosine (oQ-tRNA). The protein is S-adenosylmethionine:tRNA ribosyltransferase-isomerase of Prochlorococcus marinus (strain MIT 9313).